The sequence spans 144 residues: Large ribosomal subunit protein uL15 (144 aa).

The interval 1 to 52 (MRLNSLSPAEGAKHSAKRLGRGIGSGLGKTGGRGHKGQKSRTGGGVRRGFEG) is disordered. Residues 21 to 31 (RGIGSGLGKTG) show a composition bias toward gly residues.

Belongs to the universal ribosomal protein uL15 family. As to quaternary structure, part of the 50S ribosomal subunit.

Its function is as follows. Binds to the 23S rRNA. The polypeptide is Large ribosomal subunit protein uL15 (Haemophilus ducreyi (strain 35000HP / ATCC 700724)).